The primary structure comprises 329 residues: Glycerol-3-phosphate dehydrogenase [NAD(P)+] (329 aa).

Residues tryptophan 11, arginine 30, and lysine 103 each coordinate NADPH. Residues lysine 103, glycine 132, and serine 134 each contribute to the sn-glycerol 3-phosphate site. Alanine 136 contributes to the NADPH binding site. Sn-glycerol 3-phosphate-binding residues include lysine 187, aspartate 240, serine 250, arginine 251, and asparagine 252. Residue lysine 187 is the Proton acceptor of the active site. Arginine 251 provides a ligand contact to NADPH. Residues valine 275 and glutamate 277 each contribute to the NADPH site.

Belongs to the NAD-dependent glycerol-3-phosphate dehydrogenase family.

The protein resides in the cytoplasm. It carries out the reaction sn-glycerol 3-phosphate + NAD(+) = dihydroxyacetone phosphate + NADH + H(+). The catalysed reaction is sn-glycerol 3-phosphate + NADP(+) = dihydroxyacetone phosphate + NADPH + H(+). Its pathway is membrane lipid metabolism; glycerophospholipid metabolism. In terms of biological role, catalyzes the reduction of the glycolytic intermediate dihydroxyacetone phosphate (DHAP) to sn-glycerol 3-phosphate (G3P), the key precursor for phospholipid synthesis. In Nitrosomonas eutropha (strain DSM 101675 / C91 / Nm57), this protein is Glycerol-3-phosphate dehydrogenase [NAD(P)+].